The following is a 1216-amino-acid chain: Apical endosomal glycoprotein (1216 aa).

The first 21 residues, 1–21, serve as a signal peptide directing secretion; it reads MCLPSCLLSIWVLFMAAQSLG. The Extracellular portion of the chain corresponds to 22-1155; that stretch reads KTWVPDHCRS…SQGRVAAPVS (1134 aa). An LDL-receptor class A 1; truncated domain is found at 27–54; sequence DHCRSPTEATCNFVCDCGDCSDEAQCGF. The region spanning 62 to 224 is the MAM 1 domain; sequence NTPFTCNFEQ…DDMEFWDCGL (163 aa). Asn205 carries N-linked (GlcNAc...) asparagine glycosylation. Residues 229–269 enclose the LDL-receptor class A 2 domain; sequence ARCPLGHHHCQNKACVEPHQLCDGEDNCGDSSDEDPLICSH. Intrachain disulfides connect Cys231–Cys243, Cys238–Cys256, and Cys250–Cys267. In terms of domain architecture, MAM 2 spans 268-427; the sequence is SHHMATDFET…DLIMSNHCIL (160 aa). Residues Asn291, Asn341, and Asn368 are each glycosylated (N-linked (GlcNAc...) asparagine). In terms of domain architecture, LDL-receptor class A 3 spans 454 to 491; sequence RTCDAGHLSCDELCVPPEQLCDFQQHCAEGEDEEKCGT. Cystine bridges form between Cys456–Cys467, Cys463–Cys480, and Cys474–Cys489. MAM domains lie at 492–647, 654–813, 812–973, and 972–1142; these read TDFE…DCNP, DQEV…PCWA, WAAK…PCAQ, and AQPG…HCKQ. Asn639 carries an N-linked (GlcNAc...) asparagine glycan. N-linked (GlcNAc...) asparagine glycosylation occurs at Asn839. Residues 1156–1176 traverse the membrane as a helical segment; sequence VPVAVGGALLLFLLLLGLGGW. The Cytoplasmic segment spans residues 1177–1216; that stretch reads HWLQKQHLPCQSTDAAASGFDNILFNADQVTLPESITSNP.

In terms of tissue distribution, apical endosomal tubules of developing rat intestinal epithelial cells.

It is found in the membrane. Its function is as follows. Probably involved in the sorting and selective transport of receptors and ligands across polarized epithelia. The chain is Apical endosomal glycoprotein (Mamdc4) from Rattus norvegicus (Rat).